The following is a 416-amino-acid chain: Tryptophan synthase beta chain (416 aa).

An N6-(pyridoxal phosphate)lysine modification is found at K98.

The protein belongs to the TrpB family. In terms of assembly, tetramer of two alpha and two beta chains. The cofactor is pyridoxal 5'-phosphate.

It carries out the reaction (1S,2R)-1-C-(indol-3-yl)glycerol 3-phosphate + L-serine = D-glyceraldehyde 3-phosphate + L-tryptophan + H2O. It participates in amino-acid biosynthesis; L-tryptophan biosynthesis; L-tryptophan from chorismate: step 5/5. The beta subunit is responsible for the synthesis of L-tryptophan from indole and L-serine. The chain is Tryptophan synthase beta chain from Ruegeria pomeroyi (strain ATCC 700808 / DSM 15171 / DSS-3) (Silicibacter pomeroyi).